The sequence spans 505 residues: Aminoaldehyde dehydrogenase 2 (505 aa).

Ile-31 and Asp-99 together coordinate Na(+). Residues 159 to 161 (TPW) and 185 to 188 (KPSE) each bind NAD(+). Leu-189 provides a ligand contact to Na(+). NAD(+) is bound at residue 238-242 (GSGPT). Glu-260 functions as the Proton acceptor in the catalytic mechanism. Leu-261 is an NAD(+) binding site. The active-site Nucleophile is the Cys-295. Glu-394 and Trp-460 together coordinate NAD(+).

Belongs to the aldehyde dehydrogenase family. As to quaternary structure, forms homodimers.

The catalysed reaction is 4-aminobutanal + NAD(+) + H2O = 4-aminobutanoate + NADH + 2 H(+). It catalyses the reaction 3-aminopropanal + NAD(+) + H2O = beta-alanine + NADH + 2 H(+). It carries out the reaction 4-(trimethylamino)butanal + NAD(+) + H2O = 4-(trimethylamino)butanoate + NADH + 2 H(+). The enzyme catalyses 4-guanidinobutanal + NAD(+) + H2O = 4-guanidinobutanoate + NADH + 2 H(+). Its pathway is amine and polyamine biosynthesis; betaine biosynthesis via choline pathway; betaine from betaine aldehyde: step 1/1. Functionally, dehydrogenase that catalyzes the oxidation of several aminoaldehydes. Metabolizes and detoxifies aldehyde products of polyamine degradation to non-toxic amino acids. Catalyzes the oxidation of 4-aminobutanal and 3-aminopropanal to 4-aminobutanoate and beta-alanine, respectively. Catalyzes the oxidation of 4-(trimethylamino)butanal and 4-guanidinobutanal to 4-trimethylammoniobutanoate and 4-guanidinobutanoate, respectively. In Solanum lycopersicum (Tomato), this protein is Aminoaldehyde dehydrogenase 2.